We begin with the raw amino-acid sequence, 319 residues long: Ribosomal protein uL3 glutamine methyltransferase (319 aa).

This sequence belongs to the protein N5-glutamine methyltransferase family. PrmB subfamily.

The catalysed reaction is L-glutaminyl-[ribosomal protein uL3] + S-adenosyl-L-methionine = N(5)-methyl-L-glutaminyl-[ribosomal protein uL3] + S-adenosyl-L-homocysteine + H(+). Its function is as follows. Methylates large ribosomal subunit protein uL3 on a specific glutamine residue. This Bradyrhizobium diazoefficiens (strain JCM 10833 / BCRC 13528 / IAM 13628 / NBRC 14792 / USDA 110) protein is Ribosomal protein uL3 glutamine methyltransferase.